The sequence spans 626 residues: Carnitine O-acetyltransferase (626 aa).

Lysine 93 carries the post-translational modification N6-succinyllysine. Residue lysine 261 is modified to N6-acetyllysine; alternate. The residue at position 261 (lysine 261) is an N6-succinyllysine; alternate. N6-acetyllysine is present on lysine 268. The active-site Proton acceptor is the histidine 343. Residues lysine 419 and 423–430 (KSEKLSPD) each bind CoA. (R)-carnitine is bound by residues tyrosine 452 and serine 454. A CoA-binding site is contributed by serine 456. Threonine 465 is a binding site for (R)-carnitine. CoA is bound by residues arginine 504 and glutamine 555. The short motif at 624–626 (AKL) is the Microbody targeting signal element.

The protein belongs to the carnitine/choline acetyltransferase family. Monomer. Mostly in skeletal muscle, less in heart, liver and pancreas, only weakly detectable in brain, placenta, lung and kidney.

The protein resides in the endoplasmic reticulum. The protein localises to the peroxisome. Its subcellular location is the mitochondrion inner membrane. It is found in the mitochondrion. The enzyme catalyses (R)-carnitine + acetyl-CoA = O-acetyl-(R)-carnitine + CoA. The catalysed reaction is propanoyl-CoA + (R)-carnitine = O-propanoyl-(R)-carnitine + CoA. It catalyses the reaction butanoyl-CoA + (R)-carnitine = O-butanoyl-(R)-carnitine + CoA. It carries out the reaction hexanoyl-CoA + (R)-carnitine = O-hexanoyl-(R)-carnitine + CoA. The enzyme catalyses octanoyl-CoA + (R)-carnitine = O-octanoyl-(R)-carnitine + CoA. The catalysed reaction is decanoyl-CoA + (R)-carnitine = O-decanoyl-(R)-carnitine + CoA. It catalyses the reaction 3-methylbutanoyl-CoA + (R)-carnitine = O-3-methylbutanoyl-(R)-carnitine + CoA. It carries out the reaction 2-methylpropanoyl-CoA + (R)-carnitine = O-isobutanoyl-(R)-carnitine + CoA. The enzyme catalyses 2-methylbutanoyl-CoA + (R)-carnitine = O-2-methylbutanoyl-(R)-carnitine + CoA. The catalysed reaction is acetoacetyl-CoA + (R)-carnitine = O-3-oxobutanoyl-(R)-carnitine + CoA. It catalyses the reaction 3-hydroxybutanoyl-CoA + (R)-carnitine = O-3-hydroxybutanoyl-(R)-carnitine + CoA. It carries out the reaction 4,8-dimethylnonanoyl-CoA + (R)-carnitine = O-4,8-dimethylnonanoyl-(R)-carnitine + CoA. The enzyme catalyses 2,6-dimethylheptanoyl-CoA + (R)-carnitine = O-2,6-dimethylheptanoyl-(R)-carnitine + CoA. Catalyzes the reversible transfer of acyl groups from carnitine to coenzyme A (CoA) and regulates the acyl-CoA/CoA ratio. Also plays a crucial role in the transport of fatty acids for beta-oxidation. Responsible for the synthesis of short- and branched-chain acylcarnitines. Active towards some branched-chain amino acid oxidation pathway (BCAAO) intermediates. Trans-2-enoyl-CoAs and 2-methylacyl-CoAs are poor substrates. The chain is Carnitine O-acetyltransferase from Homo sapiens (Human).